The sequence spans 481 residues: MSLKALDYESLNENVKNCQYAVRGELYLRASELQKEGKKIIFTNVGNPHALGQKPLTFPRQVVSLCQAPFLLDDPNVGMIFPADAIARAKHYLSLTSGGLGAYSDSRGLPGVRKEVAEFIERRDGYPSDPELIFLTDGASKGVMQILNCVIRGQKDGILVPVPQYPLYSATISLLGGTLVPYYLEESENWGLDVNNLRQSVAQARSQGITVRAMVIINPGNPTGQCLSEANIREILRFCCDERLVLLGDEVYQQNIYQDERPFISSKKVLMDMGAPISKEVQLISFHTVSKGYWGECGQRGGYFEMTNIPPRTVEEIYKVASIALSPNVSAQIFMGLMVSPPKPGDISYDQFVRESKGILESLRRRARMMTDGFNSCKNVVCNFTEGAMYSFPQIKLPSKAIQAAKQAGKVPDVFYCLKLLEATGISTVPGSGFGQKEGVFHLRTTILPAEEEMPEIMDSFKKFNDEFMSQYADNFGYSRM.

The residue at position 291 (K291) is an N6-(pyridoxal phosphate)lysine. The Peroxisomal targeting signal motif lies at 479-481; sequence SRM.

It belongs to the class-I pyridoxal-phosphate-dependent aminotransferase family. Alanine aminotransferase subfamily. In terms of assembly, homodimer. Pyridoxal 5'-phosphate serves as cofactor. Post-translationally, the N-terminus is blocked. Expressed at low levels in seedlings, leaves, flowers, roots, and green siliques.

The protein localises to the peroxisome. The catalysed reaction is L-alanine + 2-oxoglutarate = pyruvate + L-glutamate. It carries out the reaction glyoxylate + L-alanine = glycine + pyruvate. It catalyses the reaction glycine + 2-oxoglutarate = glyoxylate + L-glutamate. It functions in the pathway photosynthesis; C4 acid pathway. It participates in amino-acid degradation; L-alanine degradation via transaminase pathway; pyruvate from L-alanine: step 1/1. Catalyzes the Glu:glyoxylate aminotransferase (GGT), Ala:glyoxylate aminotransferase (AGT), Ala:2-oxoglutarate aminotransferase (AKT) and Glu:pyruvate aminotransferase (GPT) reactions in peroxisomes. The protein is Glutamate--glyoxylate aminotransferase 2 (GGAT2) of Arabidopsis thaliana (Mouse-ear cress).